Here is a 340-residue protein sequence, read N- to C-terminus: Alcohol dehydrogenase (340 aa).

Zn(2+)-binding residues include Cys37, His58, Cys89, Cys92, Cys95, Cys103, and Cys145.

The protein belongs to the zinc-containing alcohol dehydrogenase family. It depends on Zn(2+) as a cofactor.

The catalysed reaction is a primary alcohol + NAD(+) = an aldehyde + NADH + H(+). The enzyme catalyses a secondary alcohol + NAD(+) = a ketone + NADH + H(+). The sequence is that of Alcohol dehydrogenase (adh) from Staphylococcus epidermidis (strain ATCC 35984 / DSM 28319 / BCRC 17069 / CCUG 31568 / BM 3577 / RP62A).